The primary structure comprises 137 residues: Large ribosomal subunit protein uL16 (137 aa).

It belongs to the universal ribosomal protein uL16 family. Part of the 50S ribosomal subunit.

Its function is as follows. Binds 23S rRNA and is also seen to make contacts with the A and possibly P site tRNAs. This is Large ribosomal subunit protein uL16 from Lactococcus lactis subsp. cremoris (strain SK11).